The sequence spans 188 residues: Putative glutamine amidotransferase-like protein YvdE homolog (188 aa).

Positions 17–188 (SPFWWNKVSY…IKDLGQGLQA (172 aa)) constitute a Glutamine amidotransferase type-1 domain.

In Lactococcus lactis subsp. cremoris (Streptococcus cremoris), this protein is Putative glutamine amidotransferase-like protein YvdE homolog.